We begin with the raw amino-acid sequence, 301 residues long: uncharacterized protein (301 aa).

Residues 1–21 form the signal peptide; the sequence is MKIKLILVLIVFLTIVNVNNS. N-linked (GlcNAc...) asparagine glycans are attached at residues Asn19, Asn59, Asn102, and Asn180.

It is found in the secreted. This is an uncharacterized protein from Dictyostelium discoideum (Social amoeba).